Reading from the N-terminus, the 357-residue chain is GTPase Obg (357 aa).

In terms of domain architecture, Obg spans 1-158; sequence MFVDNIKLKV…LEIVLELKLI (158 aa). The region spanning 159–345 is the OBG-type G domain; the sequence is ADVGLVGFPN…LKFALFDLVE (187 aa). GTP-binding positions include 165-172, 190-194, 212-215, 280-283, and 326-328; these read GFPNAGKS, FTTLT, DIPG, TKCD, and SSV. Mg(2+)-binding residues include Ser172 and Thr192.

This sequence belongs to the TRAFAC class OBG-HflX-like GTPase superfamily. OBG GTPase family. As to quaternary structure, monomer. Requires Mg(2+) as cofactor.

Its subcellular location is the cytoplasm. Functionally, an essential GTPase which binds GTP, GDP and possibly (p)ppGpp with moderate affinity, with high nucleotide exchange rates and a fairly low GTP hydrolysis rate. Plays a role in control of the cell cycle, stress response, ribosome biogenesis and in those bacteria that undergo differentiation, in morphogenesis control. This chain is GTPase Obg, found in Nautilia profundicola (strain ATCC BAA-1463 / DSM 18972 / AmH).